The following is a 480-amino-acid chain: Probable serine/threonine-protein phosphatase 2A regulatory subunit B'' subunit TON2 (480 aa).

EF-hand domains follow at residues Val186 to Asn221, Thr294 to Glu329, and Asp369 to Lys404. 5 residues coordinate Ca(2+): Asp307, Asp309, Ser311, Ser313, and Glu318.

In terms of assembly, interacts with PP2AA1. Widely expressed.

It is found in the cytoplasm. It localises to the cytoskeleton. Probable regulatory subunit of type 2A protein phosphatase involved in the control of the dynamic organization of the cortical cytoskeleton. Plays an important role in the organization of interphase microtubule arrays in part through the regulation of nucleation geometry. Required for the reorganization of cortical arrays in response to light. The protein is Probable serine/threonine-protein phosphatase 2A regulatory subunit B'' subunit TON2 (TON2) of Arabidopsis thaliana (Mouse-ear cress).